The sequence spans 502 residues: ATP synthase subunit alpha (502 aa).

169 to 176 provides a ligand contact to ATP; the sequence is GDRQTGKT.

The protein belongs to the ATPase alpha/beta chains family. F-type ATPases have 2 components, CF(1) - the catalytic core - and CF(0) - the membrane proton channel. CF(1) has five subunits: alpha(3), beta(3), gamma(1), delta(1), epsilon(1). CF(0) has three main subunits: a(1), b(2) and c(9-12). The alpha and beta chains form an alternating ring which encloses part of the gamma chain. CF(1) is attached to CF(0) by a central stalk formed by the gamma and epsilon chains, while a peripheral stalk is formed by the delta and b chains.

Its subcellular location is the cell membrane. The catalysed reaction is ATP + H2O + 4 H(+)(in) = ADP + phosphate + 5 H(+)(out). In terms of biological role, produces ATP from ADP in the presence of a proton gradient across the membrane. The alpha chain is a regulatory subunit. This chain is ATP synthase subunit alpha, found in Streptococcus pyogenes serotype M18 (strain MGAS8232).